A 436-amino-acid chain; its full sequence is Glutamyl-tRNA reductase (436 aa).

Residues 49 to 52, Ser109, 114 to 116, and Gln120 each bind substrate; these read TCNR and EGQ. The Nucleophile role is filled by Cys50. An NADP(+)-binding site is contributed by 198–203; that stretch reads GAGRMS.

This sequence belongs to the glutamyl-tRNA reductase family. In terms of assembly, homodimer.

It catalyses the reaction (S)-4-amino-5-oxopentanoate + tRNA(Glu) + NADP(+) = L-glutamyl-tRNA(Glu) + NADPH + H(+). It participates in porphyrin-containing compound metabolism; protoporphyrin-IX biosynthesis; 5-aminolevulinate from L-glutamyl-tRNA(Glu): step 1/2. The protein operates within porphyrin-containing compound metabolism; chlorophyll biosynthesis. Functionally, catalyzes the NADPH-dependent reduction of glutamyl-tRNA(Glu) to glutamate 1-semialdehyde (GSA). The chain is Glutamyl-tRNA reductase from Prochlorococcus marinus (strain MIT 9301).